The primary structure comprises 129 residues: Nif-specific regulatory protein (129 aa).

The Sigma-54 factor interaction domain maps to 1-46 (EFLLTKIGRQQGRPLTVTDSAIRLLMSHRWPGNVRDVENCLERSAI). The segment at residues 101 to 129 (QAKAARLLGMTPRQIAYRIQTLNIHMRKI) is a DNA-binding region (H-T-H motif).

In terms of assembly, interacts with sigma-54.

In terms of biological role, required for activation of most nif operons, which are directly involved in nitrogen fixation. This chain is Nif-specific regulatory protein (nifA), found in Azotobacter chroococcum mcd 1.